Here is a 398-residue protein sequence, read N- to C-terminus: Probable sugar efflux transporter (398 aa).

12 helical membrane-spanning segments follow: residues 15–35, 50–70, 81–101, 103–123, 136–156, 169–189, 209–229, 246–266, 275–295, 301–321, 333–353, and 364–384; these read VVTLAIAAFIFNTTEFVPVGL, VGIMLTIYAWVVALMSLPFML, LIGLFVLFIASHVLSFLAWNF, VLVISRIGIAFAHAIFWSITA, AQALSLLATGTALAMVLGLPI, TFFAIGLGALITLLCLIKLLP, PALMSIYLLTVVVVTAHYTAY, FATVLLLILGGAGIIGSVLFG, LLVSSAIGLLLACLLLLMPAA, LAILSIFWGVAIMIIGLGMQV, VAMSLFSGIFNIGIGAGALVG, and AIGYLGAIPALAALIWSILIF.

Belongs to the major facilitator superfamily. SotB (TC 2.A.1.2) family.

The protein localises to the cell inner membrane. Functionally, involved in the efflux of sugars. The physiological role may be the reduction of the intracellular concentration of toxic sugars or sugar metabolites. In Enterobacter sp. (strain 638), this protein is Probable sugar efflux transporter.